The chain runs to 448 residues: Probable glycine dehydrogenase (decarboxylating) subunit 1 (448 aa).

This sequence belongs to the GcvP family. N-terminal subunit subfamily. In terms of assembly, the glycine cleavage system is composed of four proteins: P, T, L and H. In this organism, the P 'protein' is a heterodimer of two subunits.

It carries out the reaction N(6)-[(R)-lipoyl]-L-lysyl-[glycine-cleavage complex H protein] + glycine + H(+) = N(6)-[(R)-S(8)-aminomethyldihydrolipoyl]-L-lysyl-[glycine-cleavage complex H protein] + CO2. Its function is as follows. The glycine cleavage system catalyzes the degradation of glycine. The P protein binds the alpha-amino group of glycine through its pyridoxal phosphate cofactor; CO(2) is released and the remaining methylamine moiety is then transferred to the lipoamide cofactor of the H protein. The sequence is that of Probable glycine dehydrogenase (decarboxylating) subunit 1 from Thermomicrobium roseum (strain ATCC 27502 / DSM 5159 / P-2).